Here is a 422-residue protein sequence, read N- to C-terminus: Histidine--tRNA ligase (422 aa).

Belongs to the class-II aminoacyl-tRNA synthetase family. Homodimer.

It localises to the cytoplasm. It catalyses the reaction tRNA(His) + L-histidine + ATP = L-histidyl-tRNA(His) + AMP + diphosphate + H(+). This chain is Histidine--tRNA ligase (hisS), found in Photobacterium profundum (strain SS9).